A 506-amino-acid polypeptide reads, in one-letter code: Steroid (22S)-hydroxylase (506 aa).

A helical transmembrane segment spans residues 12–32; the sequence is LLFFLPFILLALLTFYTTTVA. A heme-binding site is contributed by C449.

This sequence belongs to the cytochrome P450 family. Requires heme as cofactor. In terms of tissue distribution, highly expressed in roots and leaf blades. Expressed in shoot apex, stems, leaf sheaths, inflorescences and flowers.

It localises to the membrane. The enzyme catalyses a C28-steroid + reduced [NADPH--hemoprotein reductase] + O2 = a (22S)-22-hydroxy C28-steroid + oxidized [NADPH--hemoprotein reductase] + H2O + H(+). The catalysed reaction is campesterol + reduced [NADPH--hemoprotein reductase] + O2 = (22S)-22-hydroxycampesterol + oxidized [NADPH--hemoprotein reductase] + H2O + H(+). It carries out the reaction campestanol + reduced [NADPH--hemoprotein reductase] + O2 = 6-deoxycathasterone + oxidized [NADPH--hemoprotein reductase] + H2O + H(+). It participates in plant hormone biosynthesis; brassinosteroid biosynthesis. In terms of biological role, catalyzes the C22-alpha-hydroxylation step in brassinosteroid biosynthesis, which is the rate-limiting step in this biosynthetic pathway. Catalyzes the conversion of campesterol (CR) to (22S)-22-hydroxycampesterol (22-OHCR, 22-hydroxyCR) and of campestanol (CN) to 6-deoxycathasterone (6-deoxoCT). Required for auxin responses involved in the regulation of epidermal cells length of the lamina joint. The protein is Steroid (22S)-hydroxylase of Oryza sativa subsp. japonica (Rice).